The following is a 206-amino-acid chain: 3-isopropylmalate dehydratase small subunit (206 aa).

It belongs to the LeuD family. LeuD type 1 subfamily. In terms of assembly, heterodimer of LeuC and LeuD.

It carries out the reaction (2R,3S)-3-isopropylmalate = (2S)-2-isopropylmalate. It participates in amino-acid biosynthesis; L-leucine biosynthesis; L-leucine from 3-methyl-2-oxobutanoate: step 2/4. Catalyzes the isomerization between 2-isopropylmalate and 3-isopropylmalate, via the formation of 2-isopropylmaleate. The chain is 3-isopropylmalate dehydratase small subunit from Acidobacterium capsulatum (strain ATCC 51196 / DSM 11244 / BCRC 80197 / JCM 7670 / NBRC 15755 / NCIMB 13165 / 161).